The primary structure comprises 1803 residues: 6-methylsalicylic acid synthase (1803 aa).

Residues 1 to 40 (MEVHGDEVLSVDSGVSTPPSTGSGFRRPLETPGTEIGNLN) form a disordered region. The span at 13–24 (SGVSTPPSTGSG) shows a compositional bias: low complexity. The Ketosynthase family 3 (KS3) domain occupies 44–470 (QNEVAVVGMA…GTVSHAIIEE (427 aa)). Residues Cys-216, His-351, and His-391 each act as for beta-ketoacyl synthase activity in the active site. One can recognise a Malonyl-CoA:ACP transacylase (MAT) domain in the interval 581 to 894 (VWVFSGHGAQ…SIAQLHCRGA (314 aa)). The active-site For malonyltransferase activity is the Ser-667. Positions 940-1058 (HTLLGQRVPV…GQWEAGGSKN (119 aa)) are N-terminal hotdog fold. Residues 940-1218 (HTLLGQRVPV…FSEIEGTPGS (279 aa)) enclose the PKS/mFAS DH domain. The active-site Proton acceptor; for thioesterase activity is the His-972. The interval 1073-1218 (ANNKLADNFS…FSEIEGTPGS (146 aa)) is C-terminal hotdog fold. The Proton donor; for thioesterase activity role is filled by Asp-1129. The required for homotetramer formation stretch occupies residues 1141–1262 (TSVGSTLFFD…KNVADLYCGS (122 aa)). In terms of domain architecture, Ketoreductase (KR) spans 1434–1628 (STYLITGGLG…AVAVQWTSWR (195 aa)). Positions 1701-1710 (ASSADAPSAA) are enriched in low complexity. A disordered region spans residues 1701 to 1721 (ASSADAPSAAPKETNEMPESI). Residues 1726–1801 (TWLDERIRDC…HLVGWFLEKM (76 aa)) form the Carrier domain. Ser-1761 is modified (O-(pantetheine 4'-phosphoryl)serine). Residues 1783–1803 (LTWSCPTVSHLVGWFLEKMGN) form a required for catalytic activity region.

As to quaternary structure, homotetramer.

It catalyses the reaction 3 malonyl-CoA + acetyl-CoA + NADPH + 3 H(+) = 6-methylsalicylate + 3 CO2 + NADP(+) + 4 CoA + H2O. It participates in secondary metabolite biosynthesis. In terms of biological role, 6-methylsalicylic acid synthase; part of the gene cluster that mediates the biosynthesis of terreic acid, a quinone epoxide inhibitor of Bruton's tyrosine kinase. The first step of the pathway is the synthesis of 6-methylsalicylic acid (6-MSA) by the 6-methylsalicylic acid synthase atX. In the biosynthesis of 6-MSA, atX utilizes one acetyl-CoA and three malonyl-CoAs as its substrates and catalyzes a series of programmed reactions including Claisen condensation, reduction, aldol cyclization, and the hydrolytic cleavage that yields 6-MSA. The 6-methylsalicylate 1-monooxygenase atA then catalyzes the decarboxylative hydroxylation of 6-MSA to 3-methylcatechol. The next step is the conversion of 3-methylcatechol to 3-methyl-1,2,4-benzenetriol by cytochrome P450 monooxygenase atE, which is enhanced by cytochrome P450 monooxygenase atG. Then, the epoxidase atD catalyzes the epoxidation and hydroxyl oxidation of 3-methyl-1,2,4-benzenetriol to terremutin. Lastly, GMC oxidoreductase atC oxidizes terremutin to terreic acid. This chain is 6-methylsalicylic acid synthase, found in Aspergillus terreus (strain NIH 2624 / FGSC A1156).